The primary structure comprises 87 residues: MSLIVVRTHSFLFVLVLLLFASVFHSVDSQVFNPNGRYGRRDSASALSDASENKESSLGMKVYREISQDAQMENAEDRQFENQEYQS.

Positions 1-29 (MSLIVVRTHSFLFVLVLLLFASVFHSVDS) are cleaved as a signal peptide. The tract at residues 32 to 54 (FNPNGRYGRRDSASALSDASENK) is disordered.

This sequence belongs to the scoloptoxin-23 family. In terms of tissue distribution, expressed by the venom gland.

Its subcellular location is the secreted. This Ethmostigmus rubripes (Giant centipede) protein is U-scoloptoxin(23)-Er1a.